The chain runs to 261 residues: Follistatin-related protein 3 (261 aa).

Positions 1–26 are cleaved as a signal peptide; it reads MRPRAPGPLWPLPWGALAWAVGFVGS. Positions 36–107 constitute a TB domain; that stretch reads GVCWLQQGRE…SCEGVECGPG (72 aa). 8 disulfides stabilise this stretch: C38/C61, C48/C92, C62/C95, C99/C110, C104/C119, C121/C153, C125/C146, and C135/C167. N73 carries N-linked (GlcNAc...) asparagine glycosylation. The Follistatin-like 1 domain maps to 99–119; the sequence is CEGVECGPGKACRMLGGRPRC. 2 Kazal-like domains span residues 113–169 and 189–245; these read LGGR…RCRK and SAHC…SCAG. Residues 170-193 enclose the Follistatin-like 2 domain; that stretch reads SCAHVVCLRPQSCVVDQTGSAHCV. Disulfide bonds link C195/C229, C200/C222, and C211/C243. The N-linked (GlcNAc...) asparagine glycan is linked to N215. The segment at 242–261 is disordered; sequence SCAGTPEPLDPESEEEENFV. Positions 250-261 are enriched in acidic residues; it reads LDPESEEEENFV.

In terms of assembly, interacts with INHBA and INHBB. Interacts with FN1. Interacts with ADAM12. Interacts with MLLT10; the interaction enhances MLLT10 in vitro transcriptional activity and self-association. Interacts with MSTN.

The protein resides in the secreted. It localises to the nucleus. The secreted form is a binding and antagonizing protein for members of the TGF-beta family, such as activin, BMP2 and MSTN. Inhibits activin A-, activin B-, BMP2- and MSDT-induced cellular signaling; more effective on activin A than on activin B. Involved in bone formation; inhibits osteoclast differentiation. Involved in hematopoiesis; involved in differentiation of hemopoietic progenitor cells, increases hematopoietic cell adhesion to fibronectin and seems to contribute to the adhesion of hematopoietic precursor cells to the bone marrow stroma. The nuclear form is probably involved in transcriptional regulation via interaction with MLLT10. This is Follistatin-related protein 3 (FSTL3) from Bos taurus (Bovine).